Consider the following 100-residue polypeptide: Small ribosomal subunit protein bS18c (100 aa).

The segment at 81-100 (KQFERTESTPRTTGPRTRKK) is disordered. Positions 89 to 100 (TPRTTGPRTRKK) are enriched in low complexity.

It belongs to the bacterial ribosomal protein bS18 family. In terms of assembly, part of the 30S ribosomal subunit.

It localises to the plastid. The protein resides in the chloroplast. The polypeptide is Small ribosomal subunit protein bS18c (Nandina domestica (Heavenly bamboo)).